Here is a 471-residue protein sequence, read N- to C-terminus: MSATEPTKEPAKEEVAEQSTVAQAQVDGSGEPANGSPLTETEYKVEVKLADMQADPNNPLYSAQSFEELQLSEELLKGVRNMNFRKPSKIQEKALPLLLMNPPTNMIAQSQSGTGKTAAFSLNILSRIDLSRNEPQAIALAPSRELARQILGVITHMGQFMEGLKTMAAIPDPTKRNQRLDAHVLVGTPGTVQEQLKRRLIKSDSIKILVLDEADNMLDQQGMGDQCTRVKSLLPKNIQTVLFSATFPPAVINYANKFAPNSNVLTLAHEELTIEGIKQLYIDIDKDQDKYSTLLKFYGLMTQASSIIFVRTRRTAEELERRMVAEGHKVAQLSGALEGQDRDRVIDQFRSGEAKVLITTNVLARGIDVESVTMVINYDVPTMADGREADPETYLHRIGRTGRFGRVGVALTFVHDKASWQQLHDIASYFKTDLHPIDTSDWDNVEEMIQKIIKSSRAGKSTKEMTEMITS.

Residues 1-15 (MSATEPTKEPAKEEV) show a composition bias toward basic and acidic residues. A disordered region spans residues 1–39 (MSATEPTKEPAKEEVAEQSTVAQAQVDGSGEPANGSPLT). Positions 64-92 (QSFEELQLSEELLKGVRNMNFRKPSKIQE) match the Q motif motif. The Helicase ATP-binding domain occupies 97–265 (LLLMNPPTNM…NKFAPNSNVL (169 aa)). 110-117 (SQSGTGKT) contacts ATP. A DEAD box motif is present at residues 212-215 (DEAD). The region spanning 276 to 453 (GIKQLYIDID…NVEEMIQKII (178 aa)) is the Helicase C-terminal domain.

This sequence belongs to the DEAD box helicase family. DDX19/DBP5 subfamily. As to quaternary structure, associates with the nuclear pore complex.

Its subcellular location is the cytoplasm. The protein localises to the nucleus. It localises to the nuclear pore complex. It is found in the nucleus membrane. It carries out the reaction ATP + H2O = ADP + phosphate + H(+). ATP-dependent RNA helicase associated with the nuclear pore complex and essential for mRNA export from the nucleus. May participate in a terminal step of mRNA export through the removal of proteins that accompany mRNA through the nucleopore complex. May also be involved in early transcription. The sequence is that of ATP-dependent RNA helicase DBP5 (DBP5) from Phaeosphaeria nodorum (strain SN15 / ATCC MYA-4574 / FGSC 10173) (Glume blotch fungus).